The chain runs to 512 residues: 2,3-bisphosphoglycerate-independent phosphoglycerate mutase (512 aa).

Residues aspartate 13 and serine 63 each coordinate Mn(2+). Serine 63 (phosphoserine intermediate) is an active-site residue. Substrate-binding positions include histidine 124, 154-155, arginine 186, arginine 192, 262-265, and lysine 337; these read RD and RPDR. Residues aspartate 404, histidine 408, aspartate 445, histidine 446, and histidine 463 each coordinate Mn(2+).

This sequence belongs to the BPG-independent phosphoglycerate mutase family. In terms of assembly, monomer. Mn(2+) serves as cofactor.

It catalyses the reaction (2R)-2-phosphoglycerate = (2R)-3-phosphoglycerate. It participates in carbohydrate degradation; glycolysis; pyruvate from D-glyceraldehyde 3-phosphate: step 3/5. Its function is as follows. Essential for rapid growth and for sporulation. Catalyzes the interconversion of 2-phosphoglycerate and 3-phosphoglycerate. The sequence is that of 2,3-bisphosphoglycerate-independent phosphoglycerate mutase from Oceanobacillus iheyensis (strain DSM 14371 / CIP 107618 / JCM 11309 / KCTC 3954 / HTE831).